Reading from the N-terminus, the 503-residue chain is Maturase K (503 aa).

It belongs to the intron maturase 2 family. MatK subfamily.

The protein resides in the plastid. The protein localises to the chloroplast. In terms of biological role, usually encoded in the trnK tRNA gene intron. Probably assists in splicing its own and other chloroplast group II introns. The chain is Maturase K from Rosa gigantea (Giant tea rose).